The sequence spans 250 residues: MEWSDEGIILGVRRHGESAAIVELLTRGHGRHLGMVRGGASARMRPLLQPGNSVLASWRARLDEHLGYYQLEATKMRAATLLGSSHAVYGVTHLASLARLLPERDPHEEIYQRLVLTLDDFDDFGVAAAHLIRFELAILAELGFGLDLSACAATGSTTELIYVSPKSGSAVSRSAGEPWRDRLLRLPAFLRDDEAESGNGWSGQDLFDGFELTGRFLLRNVLEPRGQSHSDARAGFINAITRALQRPAES.

The protein belongs to the RecO family.

In terms of biological role, involved in DNA repair and RecF pathway recombination. This chain is DNA repair protein RecO, found in Rhodopseudomonas palustris (strain TIE-1).